A 343-amino-acid polypeptide reads, in one-letter code: Leucine-rich repeat-containing protein 23 (343 aa).

Over residues 1–30 (MSDEDDLEDSEPDQDDSEKEEDEKETEEGE) the composition is skewed to acidic residues. Residues 1–47 (MSDEDDLEDSEPDQDDSEKEEDEKETEEGEDYRKEGEEFPEEWLPTP) form a disordered region. LRR repeat units follow at residues 92-113 (HLRY…NYLT), 114-134 (HLLW…NELP), 135-155 (YLQI…ISHP), 156-177 (RLET…DPEK), 180-200 (SLHT…INLP), 201-222 (KLKN…EDLS), 223-244 (NLTT…SREM), and 246-267 (SLQY…AKLR). The tract at residues 208 to 343 (AQNMLKKVEG…RDLEPEQSLI (136 aa)) is interaction with RSPH9. An LRRCT domain is found at 280–318 (NPCTDETSYRQEALVQMPYLERLDKEFYEEEERAEADVI). The stretch at 307–329 (YEEEERAEADVIRQRLKEEKEQE) forms a coiled coil. Basic and acidic residues predominate over residues 318–337 (IRQRLKEEKEQEPEPQRDLE). The tract at residues 318 to 343 (IRQRLKEEKEQEPEPQRDLEPEQSLI) is disordered.

Component of the axonemal radial spoke complex. Interacts with RSPH3. Interacts with RSPH9. As to expression, expressed in spermatozoa.

The protein resides in the cell projection. It localises to the cilium. The protein localises to the flagellum. Its subcellular location is the cytoplasm. It is found in the cytoskeleton. The protein resides in the flagellum axoneme. In terms of biological role, essential for sperm motility and male fertility. Plays an important role in the proper assembly of the third radial spoke (RS3) head and the bridge structure between RS2 and RS3 in the sperm flagella. The chain is Leucine-rich repeat-containing protein 23 (LRRC23) from Homo sapiens (Human).